A 163-amino-acid chain; its full sequence is Cyanate hydratase (163 aa).

Catalysis depends on residues arginine 103, glutamate 106, and serine 129.

Belongs to the cyanase family.

It carries out the reaction cyanate + hydrogencarbonate + 3 H(+) = NH4(+) + 2 CO2. In terms of biological role, catalyzes the reaction of cyanate with bicarbonate to produce ammonia and carbon dioxide. This Paracoccidioides brasiliensis (strain Pb18) protein is Cyanate hydratase.